Reading from the N-terminus, the 236-residue chain is OPEP-2 protein (236 aa).

The sequence is that of OPEP-2 protein (OPEP-2) from Orgyia pseudotsugata (Douglas-fir tussock moth).